We begin with the raw amino-acid sequence, 313 residues long: 3'-5' exoribonuclease YhaM (313 aa).

A DNA-binding region (OB) is located at residues 22-90; it reads SSVKGTASNG…QLKIRQIRQA (69 aa). One can recognise an HD domain in the interval 163-279; the sequence is HVVSMLRLAK…LHQIDLMDAS (117 aa).

It belongs to the YhaM family.

Shows a 3'-5' exoribonuclease activity. This chain is 3'-5' exoribonuclease YhaM, found in Listeria innocua serovar 6a (strain ATCC BAA-680 / CLIP 11262).